Reading from the N-terminus, the 914-residue chain is Calcium-activated chloride channel regulator 1 (914 aa).

Positions methionine 1–serine 21 are cleaved as a signal peptide. The interval aspartate 46–lysine 199 is metalloprotease domain. Histidine 156 is a binding site for Zn(2+). Glutamate 157 is an active-site residue. Zn(2+) is bound by residues histidine 160 and aspartate 167. In terms of domain architecture, VWFA spans isoleucine 306 to leucine 475. N-linked (GlcNAc...) asparagine glycosylation is found at asparagine 503, asparagine 585, asparagine 770, asparagine 804, asparagine 810, asparagine 831, asparagine 836, and asparagine 890.

The protein belongs to the CLCR family. In terms of processing, glycosylated. Post-translationally, the 125-kDa product is autoproteolytically processed by the metalloprotease domain and yields to two cell-surface-associated subunits, a 90-kDa protein and a group of 37- to 41-kDa proteins. The cleavage is necessary for calcium-activated chloride channel (CaCC) activation activity. As to expression, highly expressed in small intestine and colon namely in intestinal basal crypt epithelia and goblet cells, and appendix. Weakly expressed in uterus, testis and kidney. Expressed in the airways epithelium of both asthmatic and healthy patients. Expressed in the bronchial epithelium, especially in mucus-producing goblet cells. Expressed in normal turbinate mucosa and nasal polyp. Expressed in.

The protein resides in the secreted. It is found in the extracellular space. Its subcellular location is the cell membrane. May be involved in mediating calcium-activated chloride conductance. May play critical roles in goblet cell metaplasia, mucus hypersecretion, cystic fibrosis and AHR. May be involved in the regulation of mucus production and/or secretion by goblet cells. Involved in the regulation of tissue inflammation in the innate immune response. May play a role as a tumor suppressor. Induces MUC5AC. The polypeptide is Calcium-activated chloride channel regulator 1 (CLCA1) (Homo sapiens (Human)).